A 377-amino-acid chain; its full sequence is Nitric oxide reductase FlRd-NAD(+) reductase (377 aa).

This sequence belongs to the FAD-dependent oxidoreductase family. FAD serves as cofactor.

The protein resides in the cytoplasm. The enzyme catalyses 2 reduced [nitric oxide reductase rubredoxin domain] + NAD(+) + H(+) = 2 oxidized [nitric oxide reductase rubredoxin domain] + NADH. It functions in the pathway nitrogen metabolism; nitric oxide reduction. Its function is as follows. One of at least two accessory proteins for anaerobic nitric oxide (NO) reductase. Reduces the rubredoxin moiety of NO reductase. The protein is Nitric oxide reductase FlRd-NAD(+) reductase of Escherichia coli (strain SMS-3-5 / SECEC).